Here is a 161-residue protein sequence, read N- to C-terminus: SsrA-binding protein (161 aa).

Belongs to the SmpB family.

It localises to the cytoplasm. Functionally, required for rescue of stalled ribosomes mediated by trans-translation. Binds to transfer-messenger RNA (tmRNA), required for stable association of tmRNA with ribosomes. tmRNA and SmpB together mimic tRNA shape, replacing the anticodon stem-loop with SmpB. tmRNA is encoded by the ssrA gene; the 2 termini fold to resemble tRNA(Ala) and it encodes a 'tag peptide', a short internal open reading frame. During trans-translation Ala-aminoacylated tmRNA acts like a tRNA, entering the A-site of stalled ribosomes, displacing the stalled mRNA. The ribosome then switches to translate the ORF on the tmRNA; the nascent peptide is terminated with the 'tag peptide' encoded by the tmRNA and targeted for degradation. The ribosome is freed to recommence translation, which seems to be the essential function of trans-translation. In Vibrio campbellii (strain ATCC BAA-1116), this protein is SsrA-binding protein.